The sequence spans 162 residues: Caveolin-2 (162 aa).

The Cytoplasmic segment spans residues 1–86 (MGLETEKADV…FEMSKYVIYK (86 aa)). At Tyr-19 the chain carries Phosphotyrosine; by SRC. Phosphoserine occurs at positions 20 and 23. Residue Tyr-27 is modified to Phosphotyrosine; by SRC. Positions 87–107 (FLTVFLAIPLAFAAGILFATL) form an intramembrane region, helical. Over 108–162 (SCLHIWIIMPFVKTCLMVLPSVQTIWKSVTDVVIAPLCTSVGRSFSSVSLQLSHD) the chain is Cytoplasmic.

It belongs to the caveolin family. As to quaternary structure, monomer or homodimer. Interacts with CAV1; the interaction forms a stable heterooligomeric complex that is required for targeting to lipid rafts and for caveolae formation. Tyrosine phosphorylated forms do not form heterooligomers with the Tyr-19-phosphorylated form existing as a monomer or dimer, and the Tyr-27-form as a monomer only. Interacts (tyrosine phosphorylated form) with the SH2 domain-containing proteins, RASA1, NCK1 and SRC. Interacts (tyrosine phosphorylated form) with INSR, the interaction (Tyr-27-phosphorylated form) is increased on insulin stimulation. Interacts (Tyr-19 phosphorylated form) with MAPK1 (phosphorylated form); the interaction, promoted by insulin, leads to nuclear location and MAPK1 activation. Interacts with STAT3; the interaction is increased on insulin-induced tyrosine phosphorylation leading to STAT activation. Phosphorylated on serine and tyrosine residues. CAV1 promotes phosphorylation on Ser-23 which then targets the complex to the plasma membrane, lipid rafts and caveolae. Phosphorylation on both Tyr-19 and Tyr-27 is required for insulin-induced 'Ser-727' phosphorylation of STAT3 and its activation. Phosphorylation on Tyr-19 is required for insulin-induced phosphorylation of MAPK1 and DNA binding of STAT3. Tyrosine phosphorylation is induced by both EGF and insulin.

The protein localises to the nucleus. The protein resides in the cytoplasm. It is found in the golgi apparatus membrane. It localises to the cell membrane. Its subcellular location is the membrane. The protein localises to the caveola. Functionally, may act as a scaffolding protein within caveolar membranes. Interacts directly with G-protein alpha subunits and can functionally regulate their activity. Acts as an accessory protein in conjunction with CAV1 in targeting to lipid rafts and driving caveolae formation. Positive regulator of cellular mitogenesis of the MAPK signaling pathway. Required for the insulin-stimulated nuclear translocation and activation of MAPK1 and STAT3, and the subsequent regulation of cell cycle progression. The polypeptide is Caveolin-2 (CAV2) (Muntiacus muntjak (Barking deer)).